The following is a 1264-amino-acid chain: Valine--tRNA ligase (1264 aa).

Residue Ser-2 is modified to N-acetylserine. Residues 89–219 (GSRAAVLVQQ…YSGARSVTQQ (131 aa)) form the GST C-terminal domain. The segment covering 218–230 (QQPGSEITAPQKT) has biased composition (polar residues). Residues 218-296 (QQPGSEITAP…GEKKDVSGTM (79 aa)) are disordered. Basic and acidic residues-rich tracts occupy residues 234-248 (LKKE…EKFQ) and 260-275 (HGEK…KRDP). The 'HIGH' region motif lies at 344–354 (PNVTGSLHLGH). Residues Ser-437 and Ser-527 each carry the phosphoserine modification. Lys-645 is subject to N6-acetyllysine. The 'KMSKS' region motif lies at 862–866 (KMSKS). Lys-865 lines the ATP pocket.

Belongs to the class-I aminoacyl-tRNA synthetase family. As to quaternary structure, forms high-molecular-mass aggregates with elongation factor 1.

The catalysed reaction is tRNA(Val) + L-valine + ATP = L-valyl-tRNA(Val) + AMP + diphosphate. Can be regulated by protein kinase C-dependent phosphorylation. This Rattus norvegicus (Rat) protein is Valine--tRNA ligase (Vars1).